The primary structure comprises 113 residues: Large ribosomal subunit protein uL22 (113 aa).

Belongs to the universal ribosomal protein uL22 family. Part of the 50S ribosomal subunit.

Its function is as follows. This protein binds specifically to 23S rRNA; its binding is stimulated by other ribosomal proteins, e.g. L4, L17, and L20. It is important during the early stages of 50S assembly. It makes multiple contacts with different domains of the 23S rRNA in the assembled 50S subunit and ribosome. The globular domain of the protein is located near the polypeptide exit tunnel on the outside of the subunit, while an extended beta-hairpin is found that lines the wall of the exit tunnel in the center of the 70S ribosome. This chain is Large ribosomal subunit protein uL22, found in Halalkalibacterium halodurans (strain ATCC BAA-125 / DSM 18197 / FERM 7344 / JCM 9153 / C-125) (Bacillus halodurans).